Reading from the N-terminus, the 108-residue chain is MITEKIDNISVTTKANVYFDGKCVSHGITFTDGTKKSVGVILPATLTFNTGAPEIMECVAGACEYRLAGSDSWVKSAAGEKFSVPGNAKFDIRVAEGFEAYHYICHFG.

Belongs to the nucleoside phosphorylase PpnP family.

It catalyses the reaction a purine D-ribonucleoside + phosphate = a purine nucleobase + alpha-D-ribose 1-phosphate. The catalysed reaction is adenosine + phosphate = alpha-D-ribose 1-phosphate + adenine. It carries out the reaction cytidine + phosphate = cytosine + alpha-D-ribose 1-phosphate. The enzyme catalyses guanosine + phosphate = alpha-D-ribose 1-phosphate + guanine. It catalyses the reaction inosine + phosphate = alpha-D-ribose 1-phosphate + hypoxanthine. The catalysed reaction is thymidine + phosphate = 2-deoxy-alpha-D-ribose 1-phosphate + thymine. It carries out the reaction uridine + phosphate = alpha-D-ribose 1-phosphate + uracil. The enzyme catalyses xanthosine + phosphate = alpha-D-ribose 1-phosphate + xanthine. Its function is as follows. Catalyzes the phosphorolysis of diverse nucleosides, yielding D-ribose 1-phosphate and the respective free bases. Can use uridine, adenosine, guanosine, cytidine, thymidine, inosine and xanthosine as substrates. Also catalyzes the reverse reactions. The protein is Pyrimidine/purine nucleoside phosphorylase of Polaromonas sp. (strain JS666 / ATCC BAA-500).